The primary structure comprises 211 residues: Ribosomal RNA small subunit methyltransferase G (211 aa).

S-adenosyl-L-methionine contacts are provided by residues Gly-78, Met-83, 129 to 130 (AE), and Arg-144.

The protein belongs to the methyltransferase superfamily. RNA methyltransferase RsmG family.

It localises to the cytoplasm. It catalyses the reaction guanosine(527) in 16S rRNA + S-adenosyl-L-methionine = N(7)-methylguanosine(527) in 16S rRNA + S-adenosyl-L-homocysteine. In terms of biological role, specifically methylates the N7 position of guanine in position 527 of 16S rRNA. This is Ribosomal RNA small subunit methyltransferase G from Pseudomonas syringae pv. tomato (strain ATCC BAA-871 / DC3000).